Reading from the N-terminus, the 123-residue chain is Small ribosomal subunit protein uS11 (123 aa).

Residues 1–22 (MAKKRKKKLSSPEGISHIHASA) form a disordered region.

The protein belongs to the universal ribosomal protein uS11 family. Part of the 30S ribosomal subunit. Interacts with proteins S7 and S18. Binds to IF-3.

Located on the platform of the 30S subunit, it bridges several disparate RNA helices of the 16S rRNA. Forms part of the Shine-Dalgarno cleft in the 70S ribosome. In Malacoplasma penetrans (strain HF-2) (Mycoplasma penetrans), this protein is Small ribosomal subunit protein uS11.